The primary structure comprises 299 residues: Nitrogenase iron protein (299 aa).

11 to 18 (GKGGIGKS) is a binding site for ATP. Cys99 is a binding site for [4Fe-4S] cluster. Position 102 is an ADP-ribosylarginine; by dinitrogenase reductase ADP-ribosyltransferase (Arg102). Residue Cys133 coordinates [4Fe-4S] cluster.

The protein belongs to the NifH/BchL/ChlL family. As to quaternary structure, homodimer. It depends on [4Fe-4S] cluster as a cofactor. Post-translationally, the reversible ADP-ribosylation of Arg-102 inactivates the nitrogenase reductase and regulates nitrogenase activity.

The enzyme catalyses N2 + 8 reduced [2Fe-2S]-[ferredoxin] + 16 ATP + 16 H2O = H2 + 8 oxidized [2Fe-2S]-[ferredoxin] + 2 NH4(+) + 16 ADP + 16 phosphate + 6 H(+). In terms of biological role, the key enzymatic reactions in nitrogen fixation are catalyzed by the nitrogenase complex, which has 2 components: the iron protein and the molybdenum-iron protein. In Methylobacterium nodulans (strain LMG 21967 / CNCM I-2342 / ORS 2060), this protein is Nitrogenase iron protein.